Reading from the N-terminus, the 251-residue chain is HTH-type transcriptional regulator UlaR (251 aa).

Residues 3 to 58 form the HTH deoR-type domain; it reads EAQRHQILLEMLAQLGFVTVEKVVERLGISPATARRDINKLDERGKLKKVRNGAEA. Residues 20-39 constitute a DNA-binding region (H-T-H motif); the sequence is VTVEKVVERLGISPATARRD.

Its subcellular location is the cytoplasm. Functionally, represses ulaG and the ulaABCDEF operon. In Shigella sonnei (strain Ss046), this protein is HTH-type transcriptional regulator UlaR.